A 49-amino-acid chain; its full sequence is Feruloyl esterase A (49 aa).

It belongs to the AB hydrolase superfamily. FaeA family.

The protein resides in the secreted. The enzyme catalyses feruloyl-polysaccharide + H2O = ferulate + polysaccharide.. Involved in degradation of plant cell walls. Hydrolyzes the feruloyl-arabinose ester bond in arabinoxylans as well as the feruloyl-galactose and feruloyl-arabinose ester bonds in pectin. Active against methyl esters of sinapate (MSA), but not caffeate (MCA). This chain is Feruloyl esterase A, found in Talaromyces stipitatus (strain ATCC 10500 / CBS 375.48 / QM 6759 / NRRL 1006) (Penicillium stipitatum).